Reading from the N-terminus, the 715-residue chain is Fatty acid oxidation complex subunit alpha (715 aa).

The tract at residues 1–190 (MTTTSAFMLN…KAGLVDDVVP (190 aa)) is enoyl-CoA hydratase. A 3-hydroxyacyl-CoA dehydrogenase region spans residues 306–715 (GPLNSVGILG…WTNGETDQGN (410 aa)).

This sequence in the N-terminal section; belongs to the enoyl-CoA hydratase/isomerase family. The protein in the central section; belongs to the 3-hydroxyacyl-CoA dehydrogenase family. In terms of assembly, heterotetramer of two alpha chains (FadJ) and two beta chains (FadI).

The protein localises to the cytoplasm. The enzyme catalyses a (3S)-3-hydroxyacyl-CoA = a (2E)-enoyl-CoA + H2O. It catalyses the reaction a 4-saturated-(3S)-3-hydroxyacyl-CoA = a (3E)-enoyl-CoA + H2O. The catalysed reaction is a (3S)-3-hydroxyacyl-CoA + NAD(+) = a 3-oxoacyl-CoA + NADH + H(+). It carries out the reaction (3S)-3-hydroxybutanoyl-CoA = (3R)-3-hydroxybutanoyl-CoA. Its pathway is lipid metabolism; fatty acid beta-oxidation. Functionally, catalyzes the formation of a hydroxyacyl-CoA by addition of water on enoyl-CoA. Also exhibits 3-hydroxyacyl-CoA epimerase and 3-hydroxyacyl-CoA dehydrogenase activities. In Salmonella gallinarum (strain 287/91 / NCTC 13346), this protein is Fatty acid oxidation complex subunit alpha.